Here is a 476-residue protein sequence, read N- to C-terminus: Xylan O-acetyltransferase 4 (476 aa).

The disordered stretch occupies residues 1–37 (MTKPQQQSPPSTTATTTTSPPPPPPSTPPPASSSSSS). Residues 1–63 (MTKPQQQSPP…SLLSALRRSP (63 aa)) lie on the Cytoplasmic side of the membrane. Positions 8-18 (SPPSTTATTTT) are enriched in low complexity. Over residues 19 to 31 (SPPPPPPSTPPPA) the composition is skewed to pro residues. Residues 64 to 80 (VTTLVAAFFLLALFMYG) form a helical; Signal-anchor for type II membrane protein membrane-spanning segment. Residues 81–476 (EDVRTLAELS…PSPHPPLPPQ (396 aa)) lie on the Lumenal side of the membrane. Asn-103, Asn-128, and Asn-167 each carry an N-linked (GlcNAc...) asparagine glycan. 4 disulfides stabilise this stretch: Cys-117–Cys-168, Cys-139–Cys-204, Cys-148–Cys-444, and Cys-360–Cys-440. Positions 191–193 (GDS) match the GDS motif motif. Ser-193 functions as the Nucleophile in the catalytic mechanism. Residues Asn-299 and Asn-369 are each glycosylated (N-linked (GlcNAc...) asparagine). Asp-439 (proton donor) is an active-site residue. Residues 439-442 (DCIH) carry the DXXH motif motif. His-442 acts as the Proton acceptor in catalysis.

It belongs to the PC-esterase family. TBL subfamily. As to expression, highly expressed in leaves. Expressed in roots, stems and inflorescences.

It is found in the golgi apparatus membrane. In terms of biological role, xylan acetyltransferase required for 2-O- and 3-O-monoacetylation of xylosyl residues in xylan. Catalyzes the 2-O-acetylation of xylan, followed by nonenzymatic acetyl migration to the O-3 position, resulting in products that are monoacetylated at both O-2 and O-3 positions. The chain is Xylan O-acetyltransferase 4 from Oryza sativa subsp. japonica (Rice).